A 202-amino-acid polypeptide reads, in one-letter code: MTITALTLGMILSAYLAGSISSAVLVCRLRGLPDPRTQGSGNPGATNVLRIGGVSSAALVLFFDMLKGALPAYIAFRLGLDSVSLGIIAIAACLGHIFPIFFHFKGGKGVATAFGAMAPIGPELALLLMGSWVLMVLICRYSSLAAIVTALLAPFYTWYLDDRFVLPVAMLSALIIIRHKENIQRLLKGEESKFSRKKTPKT.

Transmembrane regions (helical) follow at residues 6–26 (LTLG…AVLV), 56–76 (SAAL…YIAF), 82–102 (SVSL…PIFF), 118–138 (APIG…MVLI), and 141–161 (YSSL…WYLD).

This sequence belongs to the PlsY family. As to quaternary structure, probably interacts with PlsX.

It is found in the cell inner membrane. It catalyses the reaction an acyl phosphate + sn-glycerol 3-phosphate = a 1-acyl-sn-glycero-3-phosphate + phosphate. Its pathway is lipid metabolism; phospholipid metabolism. In terms of biological role, catalyzes the transfer of an acyl group from acyl-phosphate (acyl-PO(4)) to glycerol-3-phosphate (G3P) to form lysophosphatidic acid (LPA). This enzyme utilizes acyl-phosphate as fatty acyl donor, but not acyl-CoA or acyl-ACP. This chain is Glycerol-3-phosphate acyltransferase, found in Shewanella woodyi (strain ATCC 51908 / MS32).